The following is a 568-amino-acid chain: Urease subunit alpha (568 aa).

Residues 130–568 (GGIDTHIHFI…LPMAQRYFLF (439 aa)) enclose the Urease domain. Positions 135, 137, and 218 each coordinate Ni(2+). An N6-carboxylysine modification is found at K218. Position 220 (H220) interacts with substrate. H247 and H273 together coordinate Ni(2+). H321 acts as the Proton donor in catalysis. D361 is a Ni(2+) binding site.

It belongs to the metallo-dependent hydrolases superfamily. Urease alpha subunit family. As to quaternary structure, heterotrimer of UreA (gamma), UreB (beta) and UreC (alpha) subunits. Three heterotrimers associate to form the active enzyme. Ni cation is required as a cofactor. In terms of processing, carboxylation allows a single lysine to coordinate two nickel ions.

Its subcellular location is the cytoplasm. The catalysed reaction is urea + 2 H2O + H(+) = hydrogencarbonate + 2 NH4(+). It participates in nitrogen metabolism; urea degradation; CO(2) and NH(3) from urea (urease route): step 1/1. This Burkholderia cenocepacia (strain ATCC BAA-245 / DSM 16553 / LMG 16656 / NCTC 13227 / J2315 / CF5610) (Burkholderia cepacia (strain J2315)) protein is Urease subunit alpha.